We begin with the raw amino-acid sequence, 395 residues long: 8-amino-3,8-dideoxy-alpha-D-manno-octulosonate transaminase (395 aa).

Position 186 is an N6-(pyridoxal phosphate)lysine (lysine 186).

Belongs to the DegT/DnrJ/EryC1 family. Pyridoxal 5'-phosphate serves as cofactor.

It catalyses the reaction 8-amino-3,8-dideoxy-alpha-D-manno-octulosonate + 2-oxoglutarate = 3,8-dideoxy-8-oxo-alpha-D-manno-octulosonate + L-glutamate. The protein operates within bacterial outer membrane biogenesis; lipopolysaccharide biosynthesis. Its function is as follows. Catalyzes the second (last) step of the biosynthesis of Kdo8N (8-amino-3,8-dideoxy-D-manno-octulosonate) from Kdo (3-deoxy-D-manno-octulosonate). In Shewanella oneidensis (strain ATCC 700550 / JCM 31522 / CIP 106686 / LMG 19005 / NCIMB 14063 / MR-1), this protein is 8-amino-3,8-dideoxy-alpha-D-manno-octulosonate transaminase.